Consider the following 411-residue polypeptide: Cytosolic Fe-S cluster assembly factor narfl (411 aa).

Positions 11, 124, 180, 329, and 333 each coordinate [4Fe-4S] cluster.

The protein belongs to the NARF family. In terms of assembly, component of the CIA complex.

Component of the cytosolic iron-sulfur protein assembly (CIA) complex, a multiprotein complex that mediates the incorporation of iron-sulfur cluster into extramitochondrial Fe/S proteins. The sequence is that of Cytosolic Fe-S cluster assembly factor narfl (narfl) from Danio rerio (Zebrafish).